A 327-amino-acid polypeptide reads, in one-letter code: Methionine import ATP-binding protein MetN (327 aa).

One can recognise an ABC transporter domain in the interval 3 to 239; that stretch reads VELKNIEKIY…PKHAVTKELL (237 aa). 36-43 serves as a coordination point for ATP; it reads GYSGAGKS.

Belongs to the ABC transporter superfamily. Methionine importer (TC 3.A.1.24) family. As to quaternary structure, the complex is composed of two ATP-binding proteins (MetN), two transmembrane proteins (MetI) and a solute-binding protein (MetQ).

The protein localises to the cell inner membrane. It catalyses the reaction L-methionine(out) + ATP + H2O = L-methionine(in) + ADP + phosphate + H(+). It carries out the reaction D-methionine(out) + ATP + H2O = D-methionine(in) + ADP + phosphate + H(+). Functionally, part of the ABC transporter complex MetNIQ involved in methionine import. Responsible for energy coupling to the transport system. In Helicobacter pylori (strain ATCC 700392 / 26695) (Campylobacter pylori), this protein is Methionine import ATP-binding protein MetN.